Reading from the N-terminus, the 430-residue chain is Adenylosuccinate synthetase (430 aa).

Residues 13–19 (GDEGKGK) and 41–43 (GHT) contribute to the GTP site. D14 (proton acceptor) is an active-site residue. Positions 14 and 41 each coordinate Mg(2+). IMP contacts are provided by residues 14–17 (DEGK), 39–42 (NAGH), T130, R144, Q225, T240, and R304. H42 acts as the Proton donor in catalysis. 300–306 (ASTGRPR) contacts substrate. GTP-binding positions include R306, 332-334 (KLD), and 414-416 (STG).

It belongs to the adenylosuccinate synthetase family. Homodimer. The cofactor is Mg(2+).

The protein localises to the cytoplasm. It catalyses the reaction IMP + L-aspartate + GTP = N(6)-(1,2-dicarboxyethyl)-AMP + GDP + phosphate + 2 H(+). Its pathway is purine metabolism; AMP biosynthesis via de novo pathway; AMP from IMP: step 1/2. In terms of biological role, plays an important role in the de novo pathway of purine nucleotide biosynthesis. Catalyzes the first committed step in the biosynthesis of AMP from IMP. The chain is Adenylosuccinate synthetase from Xanthomonas oryzae pv. oryzae (strain MAFF 311018).